Consider the following 230-residue polypeptide: Small ribosomal subunit protein uS3 (230 aa).

Positions 39–107 (VRKYLADKLQ…PAQINIAEIR (69 aa)) constitute a KH type-2 domain.

The protein belongs to the universal ribosomal protein uS3 family. As to quaternary structure, part of the 30S ribosomal subunit. Forms a tight complex with proteins S10 and S14.

Binds the lower part of the 30S subunit head. Binds mRNA in the 70S ribosome, positioning it for translation. The chain is Small ribosomal subunit protein uS3 from Shewanella oneidensis (strain ATCC 700550 / JCM 31522 / CIP 106686 / LMG 19005 / NCIMB 14063 / MR-1).